Here is a 180-residue protein sequence, read N- to C-terminus: Probable DNA-directed RNA polymerase subunit delta (180 aa).

In terms of domain architecture, HTH HARE-type spans leucine 14–tryptophan 81. Residues glutamate 89 to glutamate 180 form a disordered region. The segment covering aspartate 115–isoleucine 163 has biased composition (acidic residues).

It belongs to the RpoE family. RNAP is composed of a core of 2 alpha, a beta and a beta' subunits. The core is associated with a delta subunit and one of several sigma factors.

In terms of biological role, participates in both the initiation and recycling phases of transcription. In the presence of the delta subunit, RNAP displays an increased specificity of transcription, a decreased affinity for nucleic acids, and an increased efficiency of RNA synthesis because of enhanced recycling. In Lactobacillus johnsonii (strain CNCM I-12250 / La1 / NCC 533), this protein is Probable DNA-directed RNA polymerase subunit delta.